We begin with the raw amino-acid sequence, 73 residues long: Large ribosomal subunit protein bL28 (73 aa).

Belongs to the bacterial ribosomal protein bL28 family.

In Anaeromyxobacter sp. (strain Fw109-5), this protein is Large ribosomal subunit protein bL28.